The sequence spans 107 residues: Small ribosomal subunit protein bS18 (107 aa).

Belongs to the bacterial ribosomal protein bS18 family. As to quaternary structure, part of the 30S ribosomal subunit. Forms a tight heterodimer with protein bS6.

In terms of biological role, binds as a heterodimer with protein bS6 to the central domain of the 16S rRNA, where it helps stabilize the platform of the 30S subunit. The chain is Small ribosomal subunit protein bS18 from Mycoplasmopsis agalactiae (strain NCTC 10123 / CIP 59.7 / PG2) (Mycoplasma agalactiae).